We begin with the raw amino-acid sequence, 816 residues long: Leucine--tRNA ligase (816 aa).

Residues 40–51 (SYPSGSQLHAGH) carry the 'HIGH' region motif. The short motif at 576-580 (KMSKS) is the 'KMSKS' region element. An ATP-binding site is contributed by lysine 579.

The protein belongs to the class-I aminoacyl-tRNA synthetase family.

The protein localises to the cytoplasm. The enzyme catalyses tRNA(Leu) + L-leucine + ATP = L-leucyl-tRNA(Leu) + AMP + diphosphate. This chain is Leucine--tRNA ligase, found in Clostridium perfringens (strain 13 / Type A).